Reading from the N-terminus, the 90-residue chain is Probable Fe(2+)-trafficking protein (90 aa).

It belongs to the Fe(2+)-trafficking protein family.

Could be a mediator in iron transactions between iron acquisition and iron-requiring processes, such as synthesis and/or repair of Fe-S clusters in biosynthetic enzymes. This is Probable Fe(2+)-trafficking protein from Ectopseudomonas mendocina (strain ymp) (Pseudomonas mendocina).